The primary structure comprises 485 residues: U4/U6 small nuclear ribonucleoprotein Prp31 homolog (485 aa).

Disordered regions lie at residues 1–36 (MATL…EEDV) and 329–361 (IEKW…RRLR). Residues 11–36 (DLDELSDNEAELDENDGDVGKEEEDV) are compositionally biased toward acidic residues. A Nop domain is found at 216–334 (IAPNLSAIVG…IRKKIEKWQE (119 aa)). Residues 334-348 (EPPPARQPKPLPVPD) show a composition bias toward pro residues. Over residues 352 to 361 (KKRRGGRRLR) the composition is skewed to basic residues. The short motif at 352–365 (KKRRGGRRLRKMKE) is the Nuclear localization signal element.

This sequence belongs to the PRP31 family. In terms of assembly, component of the U4/U6-U5 tri-snRNP complex composed of the U4, U6 and U5 snRNAs and pre-mRNA-splicing factors. Interacts with STA1 and SOP1.

It localises to the nucleus. Its subcellular location is the cajal body. Involved in pre-mRNA splicing. Required for the assembly of the U4/U5/U6 tri-snRNP complex, one of the building blocks of the spliceosome. Functions in association with STA1 and ZOP1 in spliceosome dynamics and pre-mRNA splicing. Required for transcriptional regulation and pre-mRNA splicing of cold-responsive genes, such as LTI78/RD29A, KIN2/COR6.6 or COR15A, especially under cold stress. May play a role in stress response. Involved in transcriptional gene silencing of endogenous transposable elements, independently of the RNA-directed DNA methylation (RdDM) pathway. Seems not to participate in the small RNA biogenesis of the RdDM pathway. This chain is U4/U6 small nuclear ribonucleoprotein Prp31 homolog, found in Arabidopsis thaliana (Mouse-ear cress).